A 475-amino-acid polypeptide reads, in one-letter code: Ornithine aminotransferase, mitochondrial (475 aa).

Residues 1–16 (MAATTRRLLYYVSKRF) constitute a mitochondrion transit peptide. The interval 23 to 43 (RSYGGLPQSNSKSPPSSSQRL) is disordered. The segment covering 29 to 41 (PQSNSKSPPSSSQ) has biased composition (low complexity). Pyridoxal 5'-phosphate-binding positions include 142 to 143 (GA) and Phe177. Arg180 contributes to the L-ornithine binding site. 265-268 (DEVQ) contributes to the pyridoxal 5'-phosphate binding site. At Lys294 the chain carries N6-(pyridoxal phosphate)lysine. An L-ornithine-binding site is contributed by Ser323. Residue Thr324 participates in pyridoxal 5'-phosphate binding.

The protein belongs to the class-III pyridoxal-phosphate-dependent aminotransferase family. As to quaternary structure, homotetramer. It depends on pyridoxal 5'-phosphate as a cofactor.

The protein resides in the mitochondrion matrix. It carries out the reaction a 2-oxocarboxylate + L-ornithine = L-glutamate 5-semialdehyde + an L-alpha-amino acid. Its pathway is amino-acid biosynthesis; L-proline biosynthesis; L-glutamate 5-semialdehyde from L-ornithine: step 1/1. In terms of biological role, mediates degradation of arginine for nitrogen recycling. Plays a role in non-host disease resistance by regulating pyrroline-5-carboxylate metabolism-induced hypersensitive response. The sequence is that of Ornithine aminotransferase, mitochondrial from Arabidopsis thaliana (Mouse-ear cress).